The following is a 732-amino-acid chain: Elongation factor 2 (732 aa).

The 242-residue stretch at 19-260 (ERIRNIGIAA…MVVRHLPSPI (242 aa)) folds into the tr-type G domain. GTP contacts are provided by residues 28-35 (AHIDHGKT), 94-98 (DTPGH), and 148-151 (NKVD). His-597 carries the diphthamide modification.

The protein belongs to the TRAFAC class translation factor GTPase superfamily. Classic translation factor GTPase family. EF-G/EF-2 subfamily.

Its subcellular location is the cytoplasm. Functionally, catalyzes the GTP-dependent ribosomal translocation step during translation elongation. During this step, the ribosome changes from the pre-translocational (PRE) to the post-translocational (POST) state as the newly formed A-site-bound peptidyl-tRNA and P-site-bound deacylated tRNA move to the P and E sites, respectively. Catalyzes the coordinated movement of the two tRNA molecules, the mRNA and conformational changes in the ribosome. The protein is Elongation factor 2 (fusA) of Pyrococcus furiosus (strain ATCC 43587 / DSM 3638 / JCM 8422 / Vc1).